Reading from the N-terminus, the 119-residue chain is MARVKRGVTAHAKHKKVYKITKGFSGRRKNTIRAAKAAADKAGQYAFRDRKRKKRTFRALWIQRLNAAVRPFGMTYSVFINGLSKSGITVDRKVLSDLAINEPAAFQAIAEKAKAALAA.

The protein belongs to the bacterial ribosomal protein bL20 family.

Functionally, binds directly to 23S ribosomal RNA and is necessary for the in vitro assembly process of the 50S ribosomal subunit. It is not involved in the protein synthesizing functions of that subunit. In Nitrobacter hamburgensis (strain DSM 10229 / NCIMB 13809 / X14), this protein is Large ribosomal subunit protein bL20.